The following is a 386-amino-acid chain: Microtubule-binding protein TANGLED1 (386 aa).

Disordered stretches follow at residues 83 to 105 (RMRGGASAQKRSPSGKFGGGVGG), 140 to 202 (AAGA…RVRS), 244 to 266 (HASTSAATDPCATPSPSKKQKRL), 303 to 330 (PARPAAVSPPPPVKAQASPAKTRRCSFS), and 345 to 386 (RLSL…ISSR). Residues 170–180 (RARRAREKQSH) show a composition bias toward basic residues. A compositionally biased stretch (low complexity) spans 181–193 (RGGAATRGADAAT). A compositionally biased stretch (polar residues) spans 375–386 (TVRTVSSKISSR).

In terms of tissue distribution, expressed in vegetative shoot tips consisting of leaf primordia and the bases of immature leaves, the shoot apical meristem, and unexpanded stem tissue. Strongly expressed in tissues enriched in dividing cells: ear primordia and embryos.

The protein resides in the cytoplasm. It is found in the cytoskeleton. It localises to the spindle. Its subcellular location is the phragmoplast. Its function is as follows. Is required for spatial control cell division during leaf development. Through an association with microtubules, acts both for the positioning of cytoskeletal arrays that establish planes of cell division during prophase and for spatial guidance of expanding phragmoplasts toward preestablished cortical division sites (CDS) during cytokinesis. In Zea mays (Maize), this protein is Microtubule-binding protein TANGLED1 (TAN1).